The primary structure comprises 460 residues: Photosystem II CP43 reaction center protein (460 aa).

A propeptide is located at residue Met1. 5 helical membrane passes run 56 to 80 (LFET…PHLA), 121 to 142 (IVGP…RDKN), 165 to 187 (KALF…RFIT), 242 to 262 (RPFS…LSYS), and 278 to 299 (WYNN…ASQA). Residue Glu354 participates in [CaMn4O5] cluster binding. The chain crosses the membrane as a helical span at residues 434 to 458 (RARAAAAGFEKGINRENEPVLSMRP).

Belongs to the PsbB/PsbC family. PsbC subfamily. PSII is composed of 1 copy each of membrane proteins PsbA, PsbB, PsbC, PsbD, PsbE, PsbF, PsbH, PsbI, PsbJ, PsbK, PsbL, PsbM, PsbT, PsbY, PsbZ, Psb30/Ycf12, at least 3 peripheral proteins of the oxygen-evolving complex and a large number of cofactors. It forms dimeric complexes. The cofactor is Binds multiple chlorophylls and provides some of the ligands for the Ca-4Mn-5O cluster of the oxygen-evolving complex. It may also provide a ligand for a Cl- that is required for oxygen evolution. PSII binds additional chlorophylls, carotenoids and specific lipids..

It localises to the plastid. Its subcellular location is the chloroplast thylakoid membrane. One of the components of the core complex of photosystem II (PSII). It binds chlorophyll and helps catalyze the primary light-induced photochemical processes of PSII. PSII is a light-driven water:plastoquinone oxidoreductase, using light energy to abstract electrons from H(2)O, generating O(2) and a proton gradient subsequently used for ATP formation. The sequence is that of Photosystem II CP43 reaction center protein from Cyanidium caldarium (Red alga).